The chain runs to 151 residues: C-C motif chemokine 25 (151 aa).

An N-terminal signal peptide occupies residues 1-22 (MNLWLLVCLVASLMGAWSTVHT). 2 disulfide bridges follow: C29-C57 and C30-C73. The tract at residues 94 to 151 (THSKQHLGSRRNLQDSHLGGQRSNTGMSRLAHSKSKSSRSTRSNKKKTSFLNMANPGP) is disordered. Basic residues predominate over residues 124–141 (AHSKSKSSRSTRSNKKKT).

Belongs to the intercrine beta (chemokine CC) family.

The protein resides in the secreted. In terms of biological role, potentially involved in T-cell development. Recombinant protein shows chemotactic activity on thymocytes, macrophages, THP-1 cells, and dendritics cells but is inactive on peripheral blood lymphocytes and neutrophils. Binds to CCR9. Binds to atypical chemokine receptor ACKR4 and mediates the recruitment of beta-arrestin (ARRB1/2) to ACKR4. The protein is C-C motif chemokine 25 (CCL25) of Canis lupus familiaris (Dog).